The chain runs to 158 residues: CD-NTase/cGAS isopeptidase (158 aa).

Glutamate 38 functions as the Proton donor/acceptor in the catalytic mechanism. Zn(2+) is bound by residues histidine 100, histidine 102, and aspartate 113.

This sequence belongs to the peptidase M67B family. Cap3 isopeptidase subfamily.

In terms of biological role, metalloprotease priming reversal component of a CBASS antivirus system. CBASS (cyclic oligonucleotide-based antiphage signaling system) provides immunity against bacteriophages. The CD-NTase protein synthesizes cyclic nucleotides in response to infection; these serve as specific second messenger signals. The signals activate a diverse range of effectors, leading to bacterial cell death and thus abortive phage infection. A type II-A(GA) CBASS system. Its function is as follows. Reverses the primed state of CdnA, the CD-NTase. Functionally, the capV-cdnA-cap2-cap3 operon provides about 10(4)-fold protection in strain BWHPSA011 against infection by phage PaMx41. In P.aeruginosa strain PAO1 it confers protection against phages PaMx41 and JBD18 but not JBD67 (JBD18 and JBD67 do not replicate in BWHPSA011 / Pa011). When acb2 in JBD67 is deleted this CBASS operon then protects against JDB67 also. This CBASS system limits prophage induction of lysogenized JBD67 as well as viral lytic replication. The polypeptide is CD-NTase/cGAS isopeptidase (Pseudomonas aeruginosa (strain BWHPSA011 / Pa011)).